Here is a 502-residue protein sequence, read N- to C-terminus: MTEKKYIVALDQGTTSSRAVVMNHDANIISVSQREFEQIYPKPGWVEHDPMEIWATQSSTLVEVLAKADISSDQIAAIGITNQRETTIVWEKETGKPIYNAIVWQCRRTAEICEHLKRDGLEDYIRSNTGLVIDPYFSGTKVKWILDHVEGSRERARRGELLFGTVDTWLIWKMTQGRVHVTDYTNASRTMLFNIHTLDWDDKMLEVLDIPREMLPEVRRSSEVYGQTNIGGKGGTRIPISGIAGDQQAALFGQLCVKEGMAKNTYGTGCFMLMNTGEKAVKSENGLLTTIACGPTGEVNYALEGAVFMAGASIQWLRDEMKLINDAYDSEYFATKVQNTNGVYVVPAFTGLGAPYWDPYARGAIFGLTRGVNANHIIRATLESIAYQTRDVLEAMQADSGIRLHALRVDGGAVANNFLMQFQSDILGTRVERPEVREVTALGAAYLAGLAVGFWQNLDELQEKAVIEREFRPGIETTERNYRYAGWKKAVKRAMAWEEHDE.

T14 lines the ADP pocket. ATP contacts are provided by T14, T15, and S16. Position 14 (T14) interacts with sn-glycerol 3-phosphate. Position 18 (R18) interacts with ADP. Sn-glycerol 3-phosphate is bound by residues R84, E85, Y136, and D246. Residues R84, E85, Y136, D246, and Q247 each contribute to the glycerol site. ADP-binding residues include T268 and G311. The ATP site is built by T268, G311, Q315, and G412. ADP is bound by residues G412 and N416.

The protein belongs to the FGGY kinase family. Homotetramer and homodimer (in equilibrium). Heterodimer with EIIA-Glc. Binds 1 zinc ion per glycerol kinase EIIA-Glc dimer. The zinc ion is important for dimerization.

The enzyme catalyses glycerol + ATP = sn-glycerol 3-phosphate + ADP + H(+). It participates in polyol metabolism; glycerol degradation via glycerol kinase pathway; sn-glycerol 3-phosphate from glycerol: step 1/1. Its activity is regulated as follows. Activity of this regulatory enzyme is affected by several metabolites. Allosterically and non-competitively inhibited by fructose 1,6-bisphosphate (FBP) and unphosphorylated phosphocarrier protein EIIA-Glc (III-Glc), an integral component of the bacterial phosphotransferase (PTS) system. Key enzyme in the regulation of glycerol uptake and metabolism. Catalyzes the phosphorylation of glycerol to yield sn-glycerol 3-phosphate. The chain is Glycerol kinase from Shigella dysenteriae serotype 1 (strain Sd197).